We begin with the raw amino-acid sequence, 339 residues long: Ketol-acid reductoisomerase (NADP(+)) (339 aa).

In terms of domain architecture, KARI N-terminal Rossmann spans Met-1 to Thr-182. Residues Tyr-24–Gln-27, Arg-48, Ser-51, Ser-53, and Asp-83–Gln-86 each bind NADP(+). His-108 is a catalytic residue. An NADP(+)-binding site is contributed by Gly-134. Residues Thr-183–Ile-328 enclose the KARI C-terminal knotted domain. Residues Asp-191, Glu-195, Glu-227, and Glu-231 each contribute to the Mg(2+) site. Residue Ser-252 participates in substrate binding.

It belongs to the ketol-acid reductoisomerase family. The cofactor is Mg(2+).

The enzyme catalyses (2R)-2,3-dihydroxy-3-methylbutanoate + NADP(+) = (2S)-2-acetolactate + NADPH + H(+). The catalysed reaction is (2R,3R)-2,3-dihydroxy-3-methylpentanoate + NADP(+) = (S)-2-ethyl-2-hydroxy-3-oxobutanoate + NADPH + H(+). It participates in amino-acid biosynthesis; L-isoleucine biosynthesis; L-isoleucine from 2-oxobutanoate: step 2/4. It functions in the pathway amino-acid biosynthesis; L-valine biosynthesis; L-valine from pyruvate: step 2/4. Its function is as follows. Involved in the biosynthesis of branched-chain amino acids (BCAA). Catalyzes an alkyl-migration followed by a ketol-acid reduction of (S)-2-acetolactate (S2AL) to yield (R)-2,3-dihydroxy-isovalerate. In the isomerase reaction, S2AL is rearranged via a Mg-dependent methyl migration to produce 3-hydroxy-3-methyl-2-ketobutyrate (HMKB). In the reductase reaction, this 2-ketoacid undergoes a metal-dependent reduction by NADPH to yield (R)-2,3-dihydroxy-isovalerate. This is Ketol-acid reductoisomerase (NADP(+)) from Rhodopseudomonas palustris (strain ATCC BAA-98 / CGA009).